We begin with the raw amino-acid sequence, 359 residues long: 3-dehydroquinate synthase (359 aa).

NAD(+)-binding positions include 71–76 (DGEQYK), 105–109 (GVIGD), 129–130 (TT), lysine 142, lysine 151, and 169–172 (CLST). Glutamate 184, histidine 247, and histidine 264 together coordinate Zn(2+).

This sequence belongs to the sugar phosphate cyclases superfamily. Dehydroquinate synthase family. The cofactor is Co(2+). Requires Zn(2+) as cofactor. NAD(+) serves as cofactor.

It localises to the cytoplasm. It catalyses the reaction 7-phospho-2-dehydro-3-deoxy-D-arabino-heptonate = 3-dehydroquinate + phosphate. The protein operates within metabolic intermediate biosynthesis; chorismate biosynthesis; chorismate from D-erythrose 4-phosphate and phosphoenolpyruvate: step 2/7. Functionally, catalyzes the conversion of 3-deoxy-D-arabino-heptulosonate 7-phosphate (DAHP) to dehydroquinate (DHQ). This chain is 3-dehydroquinate synthase, found in Shewanella halifaxensis (strain HAW-EB4).